Reading from the N-terminus, the 123-residue chain is Large ribosomal subunit protein bL12 (123 aa).

It belongs to the bacterial ribosomal protein bL12 family. In terms of assembly, homodimer. Part of the ribosomal stalk of the 50S ribosomal subunit. Forms a multimeric L10(L12)X complex, where L10 forms an elongated spine to which 2 to 4 L12 dimers bind in a sequential fashion. Binds GTP-bound translation factors.

Its function is as follows. Forms part of the ribosomal stalk which helps the ribosome interact with GTP-bound translation factors. Is thus essential for accurate translation. In Dehalococcoides mccartyi (strain ATCC BAA-2100 / JCM 16839 / KCTC 5957 / BAV1), this protein is Large ribosomal subunit protein bL12.